Here is a 1719-residue protein sequence, read N- to C-terminus: Cilia- and flagella-associated protein 43 (1719 aa).

The segment at 94-120 (VREEGAGGGADKPSGSGAVSGKQQSSG) is disordered. 6 WD repeats span residues 122–165 (SVVL…GRCR), 174–214 (SSTS…EKAV), 226–263 (PAGA…PLQL), 308–345 (TSGA…AAAI), 413–452 (CHVG…LLGR), and 513–552 (LHSA…GRVR). A disordered region spans residues 569–596 (TWPRSDGGSGAASGHAQAGPVSTTSAEG). WD repeat units lie at residues 697 to 736 (AHAR…LAAQ) and 749 to 788 (ITAG…AVAN). The interval 1022–1045 (RAKQEAARKADEDAAKRSAKDNAG) is disordered. One copy of the WD 9 repeat lies at 1073–1114 (PKPAWLVALGVEPDAVNPKLITEEQNRELKEWQAKEKSLQEE). Disordered stretches follow at residues 1220 to 1269 (MPGG…AAAA), 1277 to 1296 (ATAA…GAAG), and 1325 to 1372 (TLNP…AAAA). The span at 1221–1233 (PGGGAIGAAGGHQ) shows a compositional bias: gly residues. A compositionally biased stretch (low complexity) spans 1257-1269 (ASLAHSPSGAAAA). Residues 1344–1358 (SSALHPSHSHASVHG) show a composition bias toward low complexity. Coiled coils occupy residues 1524-1609 (AAQW…RSAQ) and 1651-1679 (HKKL…RLRT). The tract at residues 1685 to 1719 (ESGAVAGMPSPPRRLPPDIKLLAGSPSSSSVAGRT) is disordered. Residues 1709-1719 (SPSSSSVAGRT) show a composition bias toward polar residues.

Belongs to the CFAP43 family.

The protein localises to the cell projection. It localises to the cilium. Its subcellular location is the flagellum. It is found in the cytoplasm. The protein resides in the cytoskeleton. The protein localises to the flagellum axoneme. Its function is as follows. Flagellar protein involved in flagellum axoneme organization and function. The polypeptide is Cilia- and flagella-associated protein 43 (Chlamydomonas reinhardtii (Chlamydomonas smithii)).